The sequence spans 1357 residues: DNA-directed RNA polymerase subunit beta (1357 aa).

Belongs to the RNA polymerase beta chain family. As to quaternary structure, the RNAP catalytic core consists of 2 alpha, 1 beta, 1 beta' and 1 omega subunit. When a sigma factor is associated with the core the holoenzyme is formed, which can initiate transcription.

It carries out the reaction RNA(n) + a ribonucleoside 5'-triphosphate = RNA(n+1) + diphosphate. DNA-dependent RNA polymerase catalyzes the transcription of DNA into RNA using the four ribonucleoside triphosphates as substrates. The polypeptide is DNA-directed RNA polymerase subunit beta (Pseudomonas putida (Arthrobacter siderocapsulatus)).